A 977-amino-acid chain; its full sequence is Protein bric-a-brac 1 (977 aa).

The tract at residues 1–97 (MASAQAETNV…RSSSVASPSS (97 aa)) is disordered. Positions 34–43 (PKSNRSSPTQ) are enriched in polar residues. Basic and acidic residues predominate over residues 44 to 69 (QEEKRIKSEDRTSPTGGAKDEDKESQ). A compositionally biased stretch (low complexity) spans 80 to 97 (SPVSSPQGRSSSVASPSS). In terms of domain architecture, BTB spans 127–192 (VDVTLACDGR…MYRGEINVSQ (66 aa)). 4 disordered regions span residues 221-249 (AAAAAASSERMPSSPKESTSTSRTEHDRE), 281-348 (ERQQ…GSTV), 362-434 (DMPS…RFPL), and 447-497 (SGLG…ADDL). Residues 316 to 330 (ERMELEQKERERQRD) show a composition bias toward basic and acidic residues. Residues 372–396 (PLSRSSRPHSQSPQQQQAQQQGQLP) show a composition bias toward low complexity. The segment covering 469–491 (GGGVGGGGVGGGGAGGVGSGGGS) has biased composition (gly residues). An HTH psq-type domain is found at 559–611 (FRERGPLKSWRPETMAEAIFSVLKEGLSLSQAARKYDIPYPTFVLYANRVHNM). A DNA-binding region (H-T-H motif) is located at residues 569–614 (RPETMAEAIFSVLKEGLSLSQAARKYDIPYPTFVLYANRVHNMLGP). Positions 621-632 (DLRPKGRGRPQR) form a DNA-binding region, a.T hook. 2 disordered regions span residues 772 to 900 (ASIS…LGDL) and 925 to 977 (VGAS…TTSE). 4 stretches are compositionally biased toward low complexity: residues 804–816 (MAVALHHQQQQQA), 838–853 (QQQQQQQQQHHQGGHQ), 862–872 (ASSSSSASSSS), and 925–966 (VGAS…SSGG).

Leg imaginal disk at the central region of the tarsus and in eye antenna disk at the basal cylinder.

The protein resides in the nucleus. Functionally, probably acts as a transcriptional regulator. Required for the specification of the tarsal segment. Also involved in antenna development. This Drosophila melanogaster (Fruit fly) protein is Protein bric-a-brac 1 (bab1).